A 620-amino-acid chain; its full sequence is Lamin-B2 (620 aa).

Residues 1 to 38 are disordered; that stretch reads MSPPSPGRRREQRRPRAAATMATPLPGRAGGPATPLSP. The interval 1 to 48 is head; the sequence is MSPPSPGRRREQRRPRAAATMATPLPGRAGGPATPLSPTRLSRLQEKE. Threonine 23 and threonine 34 each carry phosphothreonine. Serine 37 carries the post-translational modification Phosphoserine. An IF rod domain is found at 46–402; the sequence is EKEELRELND…KLLEGEEERL (357 aa). The segment at 49-83 is coil 1A; sequence ELRELNDRLAHYIDRVRALELENDRLLLKISEKEE. Residue lysine 77 forms a Glycyl lysine isopeptide (Lys-Gly) (interchain with G-Cter in SUMO2) linkage. At lysine 81 the chain carries N6-acetyllysine; alternate. A Glycyl lysine isopeptide (Lys-Gly) (interchain with G-Cter in SUMO2); alternate cross-link involves residue lysine 81. The segment at 84–95 is linker 1; the sequence is VTTREVSGIKAL. The interval 96–229 is coil 1B; that stretch reads YESELADARR…DFRKSVFEEE (134 aa). Glycyl lysine isopeptide (Lys-Gly) (interchain with G-Cter in SUMO2) cross-links involve residues lysine 195 and lysine 255. The linker 2 stretch occupies residues 230–256; the sequence is VRETRRRHERRLVEVDSSRQQEYDFKM. The segment at 257–400 is coil 2; the sequence is AQALEELRSQ…YRKLLEGEEE (144 aa). Phosphoserine is present on residues serine 316 and serine 407. A disordered region spans residues 399-464; it reads EERLKLSPSP…GTGGSGGFHL (66 aa). The tail stretch occupies residues 401–620; it reads RLKLSPSPSS…RTTSRGCYVM (220 aa). Positions 404–431 are enriched in low complexity; it reads LSPSPSSRVTVSRATSSSSGSLSATGRL. Threonine 413 carries an O-linked (GlcNAc) threonine glycan. Phosphoserine occurs at positions 420, 422, 424, and 426. Arginine 433 is modified (omega-N-methylarginine). Positions 435-440 match the Nuclear localization signal motif; the sequence is KRKRLE. A compositionally biased stretch (low complexity) spans 444–453; sequence PLGSGPSVLG. An LTD domain is found at 462–579; the sequence is FHLAQQASAS…EEVAMRTVKK (118 aa). Lysine 489 is covalently cross-linked (Glycyl lysine isopeptide (Lys-Gly) (interchain with G-Cter in SUMO2)). Serine 497 bears the Phosphoserine mark. A disordered region spans residues 581–620; it reads SVMRENENGEEEEEEAEFGEEDLFHQQGDPRTTSRGCYVM. Positions 588 to 601 are enriched in acidic residues; the sequence is NGEEEEEEAEFGEE. Residues 609-620 show a composition bias toward polar residues; that stretch reads DPRTTSRGCYVM. Cysteine 617 bears the Cysteine methyl ester mark. A lipid anchor (S-farnesyl cysteine) is attached at cysteine 617. Residues 618 to 620 constitute a propeptide, removed in mature form; sequence YVM.

It belongs to the intermediate filament family. In terms of assembly, dimer. Lamin dimers then assemble into dimeric head-to-tail polymers. Ultimately, two head-to-tail polymers assemble laterally into a protofilament with a uniformly shaped rod of 3.5 nm in diameter. Interacts with TMEM43. In terms of processing, B-type lamins undergo a series of modifications, such as farnesylation and phosphorylation. Increased phosphorylation of the lamins occurs before envelope disintegration and probably plays a role in regulating lamin associations. Phosphorylation plays a key role in lamin organization, subcellular localization and nuclear envelope disintegration. Phosphorylation by CDK1 at Ser-37 and Ser-407 at the onset of mitosis drives lamin disassembly and nuclear envelope breakdown.

The protein localises to the nucleus lamina. In terms of biological role, lamins are intermediate filament proteins that assemble into a filamentous meshwork, and which constitute the major components of the nuclear lamina, a fibrous layer on the nucleoplasmic side of the inner nuclear membrane. Lamins provide a framework for the nuclear envelope, bridging the nuclear envelope and chromatin, thereby playing an important role in nuclear assembly, chromatin organization, nuclear membrane and telomere dynamics. The structural integrity of the lamina is strictly controlled by the cell cycle, as seen by the disintegration and formation of the nuclear envelope in prophase and telophase, respectively. In Homo sapiens (Human), this protein is Lamin-B2 (LMNB2).